Here is a 311-residue protein sequence, read N- to C-terminus: Probable porphobilinogen deaminase (311 aa).

Cys237 is subject to S-(dipyrrolylmethanemethyl)cysteine. Residues Ser270 to Leu289 form a disordered region.

The protein belongs to the HMBS family. Requires dipyrromethane as cofactor.

It catalyses the reaction 4 porphobilinogen + H2O = hydroxymethylbilane + 4 NH4(+). It participates in porphyrin-containing compound metabolism; protoporphyrin-IX biosynthesis; coproporphyrinogen-III from 5-aminolevulinate: step 2/4. Tetrapolymerization of the monopyrrole PBG into the hydroxymethylbilane pre-uroporphyrinogen in several discrete steps. The chain is Probable porphobilinogen deaminase from Nitrosopumilus maritimus (strain SCM1).